A 316-amino-acid chain; its full sequence is MSKKDSLLTTPYLQFNRTQWAALRDSVPMTLSEAEIAQLKGINEDLSIEEVAEIYLPLSRLLNFYISSNLRRQAVLEQFLGTNGQKIPYIISIAGSVAVGKSTTARVLQALLSRWPEHRRVELITTDGFLHPNAVLKERGLMKKKGFPLSYDMHRLVKFVSDLKSGADHVTAPVYSHLIYDVIPDGDKNVQQPDILILEGLNVLQSGMDYPHDPHHVFVSDFVDFSIYVDAPEDLLEHWYINRFLKFRQGAFTDPDSYFHHYAQLPEDEAVGIASQLWHEINYRNLKENILPTRERASLIMTKSSGHAVDLVRLRK.

95-102 (GSVAVGKS) lines the ATP pocket.

It belongs to the prokaryotic pantothenate kinase family.

Its subcellular location is the cytoplasm. It carries out the reaction (R)-pantothenate + ATP = (R)-4'-phosphopantothenate + ADP + H(+). It functions in the pathway cofactor biosynthesis; coenzyme A biosynthesis; CoA from (R)-pantothenate: step 1/5. This is Pantothenate kinase from Erwinia tasmaniensis (strain DSM 17950 / CFBP 7177 / CIP 109463 / NCPPB 4357 / Et1/99).